We begin with the raw amino-acid sequence, 464 residues long: Protein FAM90A18 (464 aa).

Disordered stretches follow at residues 1-42 (MMAR…DPRL), 70-387 (PATL…ASHD), and 415-437 (HSPE…SEAP). Basic and acidic residues-rich tracts occupy residues 74–89 (GKKE…KPRV) and 97–114 (NKDK…DPQR). Residues 180–197 (LASLSPLRKASLSSSSSL) show a composition bias toward low complexity.

Belongs to the FAM90 family.

The sequence is that of Protein FAM90A18 from Homo sapiens (Human).